Consider the following 231-residue polypeptide: Equistatin (231 aa).

Positions Met-1–Ala-32 are cleaved as a signal peptide. Thyroglobulin type-1 domains follow at residues Leu-34–Cys-95, Leu-102–Cys-163, and Leu-167–Cys-231. Disulfide bonds link Cys-37/Cys-56, Cys-67/Cys-74, Cys-76/Cys-95, Cys-105/Cys-124, Cys-135/Cys-142, Cys-144/Cys-163, Cys-170/Cys-191, Cys-202/Cys-209, and Cys-211/Cys-231.

The protein belongs to the protease inhibitor I31 family.

It is found in the secreted. Functionally, potent inhibitor of papain-like cysteine proteinases (Ki=0.18-0.57 nM on papain), as well as of the aspartic proteinase cathepsin D (Ki=0.3-05 nM). This is Equistatin from Actinia equina (Beadlet anemone).